The following is a 338-amino-acid chain: Biotin synthase (338 aa).

The region spanning 45–272 (DEVQMSTLLS…QSVVRLSAGR (228 aa)) is the Radical SAM core domain. Cys-60, Cys-64, and Cys-67 together coordinate [4Fe-4S] cluster. 4 residues coordinate [2Fe-2S] cluster: Cys-104, Cys-135, Cys-195, and Arg-267.

Belongs to the radical SAM superfamily. Biotin synthase family. In terms of assembly, homodimer. [4Fe-4S] cluster is required as a cofactor. [2Fe-2S] cluster serves as cofactor.

It catalyses the reaction (4R,5S)-dethiobiotin + (sulfur carrier)-SH + 2 reduced [2Fe-2S]-[ferredoxin] + 2 S-adenosyl-L-methionine = (sulfur carrier)-H + biotin + 2 5'-deoxyadenosine + 2 L-methionine + 2 oxidized [2Fe-2S]-[ferredoxin]. It participates in cofactor biosynthesis; biotin biosynthesis; biotin from 7,8-diaminononanoate: step 2/2. In terms of biological role, catalyzes the conversion of dethiobiotin (DTB) to biotin by the insertion of a sulfur atom into dethiobiotin via a radical-based mechanism. This chain is Biotin synthase, found in Parvibaculum lavamentivorans (strain DS-1 / DSM 13023 / NCIMB 13966).